The primary structure comprises 226 residues: Leucyl/phenylalanyl-tRNA--protein transferase (226 aa).

It belongs to the L/F-transferase family.

It localises to the cytoplasm. It carries out the reaction N-terminal L-lysyl-[protein] + L-leucyl-tRNA(Leu) = N-terminal L-leucyl-L-lysyl-[protein] + tRNA(Leu) + H(+). The catalysed reaction is N-terminal L-arginyl-[protein] + L-leucyl-tRNA(Leu) = N-terminal L-leucyl-L-arginyl-[protein] + tRNA(Leu) + H(+). It catalyses the reaction L-phenylalanyl-tRNA(Phe) + an N-terminal L-alpha-aminoacyl-[protein] = an N-terminal L-phenylalanyl-L-alpha-aminoacyl-[protein] + tRNA(Phe). In terms of biological role, functions in the N-end rule pathway of protein degradation where it conjugates Leu, Phe and, less efficiently, Met from aminoacyl-tRNAs to the N-termini of proteins containing an N-terminal arginine or lysine. The chain is Leucyl/phenylalanyl-tRNA--protein transferase from Pseudomonas paraeruginosa (strain DSM 24068 / PA7) (Pseudomonas aeruginosa (strain PA7)).